Consider the following 259-residue polypeptide: 1,2-dihydroxy-1,2-dihydronaphthalene dehydrogenase (259 aa).

8–32 (SITGAGSGIGLELVRSFKSAGYYVS) provides a ligand contact to NAD(+). Residue Ser140 participates in substrate binding. Tyr153 serves as the catalytic Proton acceptor.

Belongs to the short-chain dehydrogenases/reductases (SDR) family.

It catalyses the reaction (1R,2S)-1,2-dihydronaphthalene-1,2-diol + NAD(+) = naphthalene-1,2-diol + NADH + H(+). The catalysed reaction is cis-1,2-dihydroxy-1,2-dihydrodibenzothiophene + NAD(+) = 1,2-dihydroxydibenzothiophene + NADH + H(+). It functions in the pathway aromatic compound metabolism; naphthalene degradation. In terms of biological role, catalyzes the oxidation of naphthalene dihydrodiol into 1,2-dihydroxynaphthalene. The sequence is that of 1,2-dihydroxy-1,2-dihydronaphthalene dehydrogenase (doxE) from Pseudomonas sp. (strain C18).